A 98-amino-acid chain; its full sequence is Integration host factor subunit beta (98 aa).

It belongs to the bacterial histone-like protein family. As to quaternary structure, heterodimer of an alpha and a beta chain.

This protein is one of the two subunits of integration host factor, a specific DNA-binding protein that functions in genetic recombination as well as in transcriptional and translational control. The protein is Integration host factor subunit beta of Pseudomonas putida (strain W619).